The following is a 441-amino-acid chain: Ribulose bisphosphate carboxylase (441 aa).

The active-site Proton acceptor is the Lys160. Lys162 is a binding site for substrate. Mg(2+) contacts are provided by Lys186, Asp188, and Glu189. At Lys186 the chain carries N6-carboxylysine. His278 acts as the Proton acceptor in catalysis. Substrate is bound by residues Arg279, His311, 364–366 (SGG), and 386–389 (QVGG).

Belongs to the RuBisCO large chain family. Type III subfamily. Homodimer. In contrast to form I RuBisCO, the form III RuBisCO is composed solely of large subunits. It depends on Mg(2+) as a cofactor.

It carries out the reaction 2 (2R)-3-phosphoglycerate + 2 H(+) = D-ribulose 1,5-bisphosphate + CO2 + H2O. The catalysed reaction is D-ribulose 1,5-bisphosphate + O2 = 2-phosphoglycolate + (2R)-3-phosphoglycerate + 2 H(+). Its activity is regulated as follows. Reversibly inhibited by O(2). Catalyzes the addition of molecular CO(2) and H(2)O to ribulose 1,5-bisphosphate (RuBP), generating two molecules of 3-phosphoglycerate (3-PGA). Functions in an archaeal AMP degradation pathway, together with AMP phosphorylase and R15P isomerase. In Archaeoglobus fulgidus (strain ATCC 49558 / DSM 4304 / JCM 9628 / NBRC 100126 / VC-16), this protein is Ribulose bisphosphate carboxylase.